A 1581-amino-acid polypeptide reads, in one-letter code: Calmodulin-regulated spectrin-associated protein 1 (1581 aa).

The region spanning 215–330 is the Calponin-homology (CH) domain; sequence ESPAHQKVRY…FIAELFWWFE (116 aa). Residues serine 216, serine 370, serine 374, and serine 415 each carry the phosphoserine modification. The interval 351–399 is disordered; it reads VLQQKSSRPPVPISNATKRSFLGSPAAMSPADQPPSTQPLAEGSHRYHL. The interval 424–470 is disordered; sequence RQKQQKVSQTEEIPDQRHRSNSLTRVDGQPRGAIGAWPDKKNRPVSQ. Threonine 511 is subject to Phosphothreonine. Phosphoserine occurs at positions 550, 553, 560, 572, and 586. Over residues 603–617 the composition is skewed to basic and acidic residues; the sequence is KQITTKEDERGEGRP. Residues 603–649 are disordered; the sequence is KQITTKEDERGEGRPRTIMAKRPSEGSQPMVRKKVSGGHGSRDLNRT. Phosphoserine occurs at positions 626, 718, 724, 734, and 736. Residues 765–785 are compositionally biased toward basic and acidic residues; the sequence is ESAKLQEDMKVKEHEDKDDAS. 2 disordered regions span residues 765 to 803 and 821 to 866; these read ESAK…SMSM and LNSC…SKDP. Composition is skewed to low complexity over residues 792-803 and 826-837; these read LSTTSQLSSMSM and TKSSTSSSQKTT. The segment covering 853–865 has biased composition (basic and acidic residues); sequence QKREQSPGRHSKD. The segment at 867-888 is sufficient for interaction with SPTBN1; the sequence is ASLLASELVQLHMQLEEKRRAI. Coiled-coil stretches lie at residues 869–905 and 1005–1037; these read LLAS…QRLK and DVNE…QEQL. The interval 899 to 918 is sufficient for interaction with calmodulin; that stretch reads SARQRLKLGKAAFLHVVKKG. 4 disordered regions span residues 1064-1143, 1225-1251, 1288-1315, and 1332-1428; these read FVEP…ELPE, PDED…PGVG, QLEA…EEEK, and QALE…DWET. A Phosphoserine modification is found at serine 1069. The segment covering 1092-1103 has biased composition (basic and acidic residues); sequence RPAELKVPKDRQ. Residues 1104-1132 show a composition bias toward polar residues; it reads QGCSRSKTPTPSVETLPQSRSLPPSTHPR. At serine 1133 the chain carries Phosphoserine. Residues 1225 to 1237 show a composition bias toward basic and acidic residues; it reads PDEDGEVVGHESS. Positions 1265 to 1336 form a coiled coil; sequence AKKRAAFLLK…RRKQQQALEE (72 aa). Residues 1342–1353 are compositionally biased toward basic residues; that stretch reads PKSKPKKPRPKS. Residues 1361–1372 are compositionally biased toward polar residues; it reads SDSGTKCSSTHN. Residues 1373-1390 show a composition bias toward low complexity; that stretch reads LSQTHSGSSLSLASAATT. 2 positions are modified to phosphoserine: serine 1378 and serine 1407. A CKK domain is found at 1443–1576; the sequence is GPKLFKEPSS…QPKRPTVPKK (134 aa). A Phosphotyrosine modification is found at tyrosine 1516.

Belongs to the CAMSAP1 family. In terms of assembly, interacts with spectrin via SPTBN1; the interaction is direct. Interacts with calmodulin; calcium-dependent it prevents interaction with spectrin. Expressed in the central nervous system.

It localises to the cytoplasm. The protein resides in the cytoskeleton. Key microtubule-organizing protein that specifically binds the minus-end of non-centrosomal microtubules and regulates their dynamics and organization. Specifically recognizes growing microtubule minus-ends and stabilizes microtubules. Acts on free microtubule minus-ends that are not capped by microtubule-nucleating proteins or other factors and protects microtubule minus-ends from depolymerization. In contrast to CAMSAP2 and CAMSAP3, tracks along the growing tips of minus-end microtubules without significantly affecting the polymerization rate: binds at the very tip of the microtubules minus-end and acts as a minus-end tracking protein (-TIP) that dissociates from microtubules after allowing tubulin incorporation. Through interaction with spectrin may regulate neurite outgrowth. The chain is Calmodulin-regulated spectrin-associated protein 1 (Camsap1) from Mus musculus (Mouse).